Reading from the N-terminus, the 284-residue chain is Small ribosomal subunit protein uS2 (284 aa).

This sequence belongs to the universal ribosomal protein uS2 family.

The protein is Small ribosomal subunit protein uS2 (rpsB) of Mycoplasma genitalium (strain ATCC 33530 / DSM 19775 / NCTC 10195 / G37) (Mycoplasmoides genitalium).